Consider the following 108-residue polypeptide: UPF0060 membrane protein YnfA (108 aa).

Residues 1-5 (MIKTT) are Periplasmic-facing. A helical transmembrane segment spans residues 6-26 (LLFFATALCEIIGCFLPWLWL). The Cytoplasmic portion of the chain corresponds to 27–30 (KRNA). Residues 31–51 (SIWLLLPAGISLALFVWLLTL) traverse the membrane as a helical segment. Over 52–60 (HPAASGRVY) the chain is Periplasmic. A helical transmembrane segment spans residues 61 to 81 (AAYGGVYVCTALIWLRVVDGV). At 82 to 84 (KLS) the chain is on the cytoplasmic side. A helical transmembrane segment spans residues 85–105 (LYDWTGALIALCGMLIIVAGW). Residues 106–108 (GRT) are Periplasmic-facing.

It belongs to the UPF0060 family.

The protein localises to the cell inner membrane. The protein is UPF0060 membrane protein YnfA of Escherichia coli (strain SMS-3-5 / SECEC).